Here is a 34-residue protein sequence, read N- to C-terminus: Antimicrobial peptide Alo-2 (34 aa).

Disulfide bonds link cysteine 1–cysteine 18, cysteine 8–cysteine 22, and cysteine 17–cysteine 33.

The protein resides in the secreted. In terms of biological role, has antifungal activity against C.glabrata. This Acrocinus longimanus (Giant harlequin beetle) protein is Antimicrobial peptide Alo-2.